A 385-amino-acid chain; its full sequence is Probable peptidoglycan glycosyltransferase FtsW (385 aa).

The next 9 helical transmembrane spans lie at 18–38, 57–77, 81–101, 111–131, 157–177, 195–215, 280–300, 311–331, and 347–367; these read LLWTAILLALAGLVMVSSASL, IYLALGLGVGAFVYYAVPLAL, LRFVMLPVALVALVMVFIPGL, WIALPGLTIQASEIVKLCFVL, LLGVLMLLLLLEPDFGAVVVL, FLLIGLIAVALGGLVAFAEPY, LGLLGNVALIGGFILLGWRVF, LLYHAYLVYGCAFVFCSQAFI, and LPFISYGGSSLLISAVMVGLI.

This sequence belongs to the SEDS family. FtsW subfamily.

The protein resides in the cell inner membrane. It carries out the reaction [GlcNAc-(1-&gt;4)-Mur2Ac(oyl-L-Ala-gamma-D-Glu-L-Lys-D-Ala-D-Ala)](n)-di-trans,octa-cis-undecaprenyl diphosphate + beta-D-GlcNAc-(1-&gt;4)-Mur2Ac(oyl-L-Ala-gamma-D-Glu-L-Lys-D-Ala-D-Ala)-di-trans,octa-cis-undecaprenyl diphosphate = [GlcNAc-(1-&gt;4)-Mur2Ac(oyl-L-Ala-gamma-D-Glu-L-Lys-D-Ala-D-Ala)](n+1)-di-trans,octa-cis-undecaprenyl diphosphate + di-trans,octa-cis-undecaprenyl diphosphate + H(+). It functions in the pathway cell wall biogenesis; peptidoglycan biosynthesis. Its function is as follows. Peptidoglycan polymerase that is essential for cell division. This Alcanivorax borkumensis (strain ATCC 700651 / DSM 11573 / NCIMB 13689 / SK2) protein is Probable peptidoglycan glycosyltransferase FtsW.